A 426-amino-acid polypeptide reads, in one-letter code: MVKFETVRGMKDYIGIDAEKIRYLESTFRDLAKKYGYSEIITPVVEEFKLFELKGGEELRQTMYVFKDKADREISLRPEITPSVARAYIQNLQSSPKPIRLFYFGTVYRYDEPQYGRYREFRQAGIEMIGDSSILADVEVLDLLYNFYDKLNLSKDITIKINNIGIFRKIMDKYNIEDNLQEHVLHLIDKNKVDEALVILEKNIKNKDIMDFLNMILTKKEAKLEDIESLAELEEVSKLDIKNEFEYLLRLSRILSSLNVKFKVDLGFVRGLAYYTGLIFEVLHPSVQFSIAGGGRYDKLIELYGGLPSPAIGFAIGVERTLLVIKDLKVEEPINVIVVGISEEAIPAMFTVSRMLRKEEYKVVINTKDQPLSKLLPYYASQGFKLAIIIGKQELEKNMITVRNLITRKQISIPLENVLDAIKQTL.

It belongs to the class-II aminoacyl-tRNA synthetase family.

The protein localises to the cytoplasm. The catalysed reaction is tRNA(His) + L-histidine + ATP = L-histidyl-tRNA(His) + AMP + diphosphate + H(+). This is Histidine--tRNA ligase from Saccharolobus solfataricus (strain ATCC 35092 / DSM 1617 / JCM 11322 / P2) (Sulfolobus solfataricus).